A 139-amino-acid polypeptide reads, in one-letter code: D-ribose pyranase (139 aa).

His-20 functions as the Proton donor in the catalytic mechanism. Residues Asp-28, His-106, and 128–130 (YAN) each bind substrate.

This sequence belongs to the RbsD / FucU family. RbsD subfamily. Homodecamer.

Its subcellular location is the cytoplasm. It catalyses the reaction beta-D-ribopyranose = beta-D-ribofuranose. Its pathway is carbohydrate metabolism; D-ribose degradation; D-ribose 5-phosphate from beta-D-ribopyranose: step 1/2. Functionally, catalyzes the interconversion of beta-pyran and beta-furan forms of D-ribose. This chain is D-ribose pyranase, found in Citrobacter koseri (strain ATCC BAA-895 / CDC 4225-83 / SGSC4696).